The sequence spans 231 residues: Modulator of macroautophagy TMEM150B-B (231 aa).

Residue methionine 1 is a topological domain, cytoplasmic. Residues 2 to 22 (WAWALLPICLTVWATGGIWIV) form a helical membrane-spanning segment. Topologically, residues 23–50 (YAMSVSNGSVNLSDGFPYISVSGTYPPQ) are extracellular. 2 N-linked (GlcNAc...) asparagine glycosylation sites follow: asparagine 29 and asparagine 33. The helical transmembrane segment at 51–71 (SCVFGQVLNVGAMLAVWISVI) threads the bilayer. At 72–83 (RFQQIRDYNCHS) the chain is on the cytoplasmic side. Residues 84 to 104 (VLNSVSLATGILCALGTSIVG) form a helical membrane-spanning segment. Over 105-115 (NFQQSNQLQTH) the chain is Extracellular. Residues 116–136 (LAGAFLAFIIGNVYFWMQTAL) traverse the membrane as a helical segment. The Cytoplasmic portion of the chain corresponds to 137–150 (TYMVKPKHGGCYIG). The helical transmembrane segment at 151–171 (PIRFCLSIACTALIVAMAVFL) threads the bilayer. Over 172–183 (KMNMKSVSAICE) the chain is Extracellular. The chain crosses the membrane as a helical span at residues 184 to 204 (WIVAMILFLLYGLFAVDFWHL). At 205 to 231 (DGHFFHVKKRRTVIPNEMEVSTVTLSI) the chain is on the cytoplasmic side.

The protein belongs to the DRAM/TMEM150 family.

The protein localises to the cell membrane. The protein resides in the endosome membrane. It localises to the cytoplasmic vesicle. Its subcellular location is the autophagosome membrane. Functionally, modulator of macroautophagy that causes accumulation of autophagosomes under basal conditions and enhances autophagic flux. Represses cell death and promotes long-term clonogenic survival of cells grown in the absence of glucose in a macroautophagy-independent manner. May have some role in extracellular matrix engulfment or growth factor receptor recycling, both of which can modulate cell survival. This is Modulator of macroautophagy TMEM150B-B from Xenopus laevis (African clawed frog).